A 402-amino-acid chain; its full sequence is Beta-1,4-galactosyltransferase 1 (402 aa).

Residues 1–24 are Cytoplasmic-facing; the sequence is MKFREPLLGGSAAMPGASLQRACR. A helical; Signal-anchor for type II membrane protein transmembrane segment spans residues 25–44; sequence LLVAVCALHLGVTLVYYLAG. Topologically, residues 45–402 are lumenal; sequence RDLRRLPQLV…KITVDIGTPS (358 aa). Positions 77–130 are disordered; it reads LRLRGVAPPPPLQNSSKPRSRAPSNLDAYSHPGPGPGPGSNLTSAPVPSTTTRS. N-linked (GlcNAc...) asparagine glycosylation is found at N90 and N117. Over residues 116 to 130 the composition is skewed to polar residues; that stretch reads SNLTSAPVPSTTTRS. Cysteines 134 and 176 form a disulfide. UDP-alpha-D-galactose is bound by residues 187–191, 226–228, 253–254, and W314; these read PFRNR, FNR, and VD. A disulfide bond links C247 and C266. D254 is a Mn(2+) binding site. Position 316–319 (316–319) interacts with N-acetyl-D-glucosamine; that stretch reads GEDD. H347 serves as a coordination point for Mn(2+). Residue 347 to 349 participates in UDP-alpha-D-galactose binding; sequence HSR. R359 provides a ligand contact to N-acetyl-D-glucosamine.

Belongs to the glycosyltransferase 7 family. As to quaternary structure, homodimer; and heterodimer with alpha-lactalbumin to form lactose synthase. Interacts (via N-terminal cytoplasmic domain) with UBE2Q1 (via N-terminus); the interaction is direct. Requires Mn(2+) as cofactor. Post-translationally, the soluble form derives from the membrane forms by proteolytic processing. As to expression, detected in milk (at protein level).

It is found in the golgi apparatus. Its subcellular location is the golgi stack membrane. The protein localises to the cell membrane. The protein resides in the cell surface. It localises to the cell projection. It is found in the filopodium. Its subcellular location is the secreted. It carries out the reaction D-glucose + UDP-alpha-D-galactose = lactose + UDP + H(+). The enzyme catalyses an N-acetyl-beta-D-glucosaminyl derivative + UDP-alpha-D-galactose = a beta-D-galactosyl-(1-&gt;4)-N-acetyl-beta-D-glucosaminyl derivative + UDP + H(+). It catalyses the reaction N-acetyl-D-glucosamine + UDP-alpha-D-galactose = beta-D-galactosyl-(1-&gt;4)-N-acetyl-D-glucosamine + UDP + H(+). The catalysed reaction is a beta-D-GlcNAc-(1-&gt;3)-beta-D-Gal-(1-&gt;4)-beta-D-Glc-(1&lt;-&gt;1)-Cer(d18:1(4E)) + UDP-alpha-D-galactose = a neolactoside nLc4Cer(d18:1(4E)) + UDP + H(+). It carries out the reaction a beta-D-glucosylceramide + UDP-alpha-D-galactose = a beta-D-galactosyl-(1-&gt;4)-beta-D-glucosyl-(1&lt;-&gt;1)-ceramide + UDP + H(+). The enzyme catalyses a neolactoside IV(3)-beta-GlcNAc-nLc4Cer + UDP-alpha-D-galactose = a neolactoside nLc6Cer + UDP + H(+). The protein operates within protein modification; protein glycosylation. In terms of biological role, the Golgi complex form catalyzes the production of lactose in the lactating mammary gland and could also be responsible for the synthesis of complex-type N-linked oligosaccharides in many glycoproteins as well as the carbohydrate moieties of glycolipids. Functionally, the cell surface form functions as a recognition molecule during a variety of cell to cell and cell to matrix interactions, as those occurring during development and egg fertilization, by binding to specific oligosaccharide ligands on opposing cells or in the extracellular matrix. The secreted form is responsible for the synthesis of complex-type to N-linked oligosaccharides in many glycoproteins as well as the carbohydrate moieties of glycolipids. The protein is Beta-1,4-galactosyltransferase 1 (B4GALT1) of Bos taurus (Bovine).